The following is a 147-amino-acid chain: Small ribosomal subunit protein uS12 (147 aa).

The protein belongs to the universal ribosomal protein uS12 family. In terms of assembly, part of the 30S ribosomal subunit.

Functionally, with S4 and S5 plays an important role in translational accuracy. Located at the interface of the 30S and 50S subunits. The chain is Small ribosomal subunit protein uS12 from Sulfurisphaera tokodaii (strain DSM 16993 / JCM 10545 / NBRC 100140 / 7) (Sulfolobus tokodaii).